The primary structure comprises 119 residues: Protein TusC (119 aa).

It belongs to the DsrF/TusC family. Heterohexamer, formed by a dimer of trimers. The hexameric TusBCD complex contains 2 copies each of TusB, TusC and TusD. The TusBCD complex interacts with TusE.

It is found in the cytoplasm. Part of a sulfur-relay system required for 2-thiolation of 5-methylaminomethyl-2-thiouridine (mnm(5)s(2)U) at tRNA wobble positions. The chain is Protein TusC from Shigella sonnei (strain Ss046).